We begin with the raw amino-acid sequence, 63 residues long: Large ribosomal subunit protein uL30 (63 aa).

Belongs to the universal ribosomal protein uL30 family. In terms of assembly, part of the 50S ribosomal subunit.

The protein is Large ribosomal subunit protein uL30 of Hahella chejuensis (strain KCTC 2396).